A 334-amino-acid polypeptide reads, in one-letter code: UDP-N-acetylglucosamine 4,6-dehydratase (inverting) (334 aa).

Residues 13–16 (TGSF), 37–42 (SRDELK), 61–62 (DV), Ala81, Lys85, and 123–124 (LS) contribute to the NADP(+) site. Lys85 serves as a coordination point for substrate. Lys127 is a catalytic residue. Tyr135 and Lys139 together coordinate NADP(+). Asn167 serves as a coordination point for substrate. An NADP(+)-binding site is contributed by 168–172 (VVGSR). Positions 175, 193, 252, and 255 each coordinate substrate.

It belongs to the polysaccharide synthase family. In terms of assembly, homohexamer. Requires NADP(+) as cofactor.

It carries out the reaction UDP-N-acetyl-alpha-D-glucosamine = UDP-2-acetamido-2,6-dideoxy-beta-L-arabino-hex-4-ulose + H2O. Its function is as follows. Catalyzes the first step in the biosynthesis of pseudaminic acid, a sialic-acid-like sugar that is used to modify flagellin. Has both C6 dehydratase and C5 epimerase activities that result in the production of both UDP-2-acetamido-2,6-dideoxy-beta-L-arabino-4-hexulose and UDP-2-acetamido-2,6-dideoxy-alpha-D-xylo-4-hexulose. This chain is UDP-N-acetylglucosamine 4,6-dehydratase (inverting) (pseB), found in Campylobacter jejuni subsp. jejuni serotype O:2 (strain ATCC 700819 / NCTC 11168).